The primary structure comprises 589 residues: GTPase LSG1-2 (589 aa).

Positions methionine 1 to aspartate 26 are disordered. The CP-type G domain occupies tryptophan 158–proline 366. The DARXP motif signature appears at aspartate 176 to proline 180. Residues asparagine 206–aspartate 209 are G4. Asparagine 206 to aspartate 209 lines the GTP pocket. The segment at alanine 237–threonine 239 is G5. The interval glycine 315–serine 322 is G1. Asparagine 318 to serine 323 serves as a coordination point for GTP. Residues glycine 341–histidine 345 are G2. A G3 region spans residues aspartate 359–glycine 362. A GTP-binding site is contributed by glycine 362. The span at glycine 495–asparagine 509 shows a compositional bias: acidic residues. Disordered stretches follow at residues glycine 495–isoleucine 515 and serine 534–arginine 589. Positions serine 534–lysine 541 match the Nuclear localization signal motif. The segment covering serine 534–arginine 558 has biased composition (basic residues). Residues proline 580–arginine 589 are compositionally biased toward polar residues.

Belongs to the TRAFAC class YlqF/YawG GTPase family. As to expression, ubiquitous, with the highest expression in reproductive and strongly dividing tissues.

The protein resides in the cytoplasm. It localises to the nucleus. GTPase involved in ribosome biogenesis. Binds to 23S rRNA and associates with 60S pre-ribosomes. Involved in early cotyledon and leaf development. The sequence is that of GTPase LSG1-2 from Arabidopsis thaliana (Mouse-ear cress).